Here is a 196-residue protein sequence, read N- to C-terminus: Ribose 1,5-bisphosphate phosphokinase PhnN (196 aa).

The protein belongs to the ribose 1,5-bisphosphokinase family.

It catalyses the reaction alpha-D-ribose 1,5-bisphosphate + ATP = 5-phospho-alpha-D-ribose 1-diphosphate + ADP. Its pathway is metabolic intermediate biosynthesis; 5-phospho-alpha-D-ribose 1-diphosphate biosynthesis; 5-phospho-alpha-D-ribose 1-diphosphate from D-ribose 5-phosphate (route II): step 3/3. Catalyzes the phosphorylation of ribose 1,5-bisphosphate to 5-phospho-D-ribosyl alpha-1-diphosphate (PRPP). The protein is Ribose 1,5-bisphosphate phosphokinase PhnN of Psychromonas ingrahamii (strain DSM 17664 / CCUG 51855 / 37).